We begin with the raw amino-acid sequence, 364 residues long: Probable UDP-arabinopyranose mutase 1 (364 aa).

Positions 103–105 match the DXD motif motif; it reads DDD. R151 is a glycosylation site (N-linked (Glc...) arginine).

The protein belongs to the RGP family. In terms of assembly, homopentamer or homohexamer. It depends on Mn(2+) as a cofactor. Mg(2+) is required as a cofactor. Reversibly glycosylated by UDP-glucose, UDP-xylose and UDP-galactose, but not UDP-mannose.

The protein localises to the secreted. The protein resides in the cell wall. It is found in the cell junction. Its subcellular location is the plasmodesma. It localises to the golgi apparatus. The catalysed reaction is UDP-beta-L-arabinofuranose = UDP-beta-L-arabinopyranose. Its activity is regulated as follows. Inhibited by inhibitor protein (IP) which may be a form of sucrose synthase. Probable UDP-L-arabinose mutase involved in the biosynthesis of cell wall non-cellulosic polysaccharides. Was initially shown to possess an autoglycosylating activity which is dependent on the presence of UDP-glucose and manganese. The chain is Probable UDP-arabinopyranose mutase 1 from Pisum sativum (Garden pea).